Reading from the N-terminus, the 481-residue chain is Probable autolysin LytO (481 aa).

One can recognise a Peptidase C51 domain in the interval 7–148 (KNEFIEWLKT…AYDFPMWFIR (142 aa)). Residues 155 to 165 (TAPRSVQSPTQ) show a composition bias toward polar residues. The disordered stretch occupies residues 155–177 (TAPRSVQSPTQAPKKETAKPQPK). The 126-residue stretch at 198-323 (SNPKGIVIHN…NEFTSTSCPH (126 aa)) folds into the N-acetylmuramoyl-L-alanine amidase domain. One can recognise an SH3b domain in the interval 398–466 (EESARFTNGN…YLPIRTWNGS (69 aa)).

It belongs to the N-acetylmuramoyl-L-alanine amidase 2 family.

It catalyses the reaction Hydrolyzes the link between N-acetylmuramoyl residues and L-amino acid residues in certain cell-wall glycopeptides.. Functionally, has weak lytic activity toward S.aureus cells. The chain is Probable autolysin LytO from Staphylococcus aureus (strain NCTC 8325 / PS 47).